Here is a 366-residue protein sequence, read N- to C-terminus: NADH-quinone oxidoreductase subunit D (366 aa).

It belongs to the complex I 49 kDa subunit family. NDH-1 is composed of 14 different subunits. Subunits NuoB, C, D, E, F, and G constitute the peripheral sector of the complex.

It is found in the cell membrane. It catalyses the reaction a quinone + NADH + 5 H(+)(in) = a quinol + NAD(+) + 4 H(+)(out). In terms of biological role, NDH-1 shuttles electrons from NADH, via FMN and iron-sulfur (Fe-S) centers, to quinones in the respiratory chain. The immediate electron acceptor for the enzyme in this species is believed to be a menaquinone. Couples the redox reaction to proton translocation (for every two electrons transferred, four hydrogen ions are translocated across the cytoplasmic membrane), and thus conserves the redox energy in a proton gradient. In Desulforamulus reducens (strain ATCC BAA-1160 / DSM 100696 / MI-1) (Desulfotomaculum reducens), this protein is NADH-quinone oxidoreductase subunit D.